A 469-amino-acid chain; its full sequence is 3-isopropylmalate dehydratase large subunit (469 aa).

[4Fe-4S] cluster is bound by residues C347, C407, and C410.

The protein belongs to the aconitase/IPM isomerase family. LeuC type 1 subfamily. As to quaternary structure, heterodimer of LeuC and LeuD. The cofactor is [4Fe-4S] cluster.

It catalyses the reaction (2R,3S)-3-isopropylmalate = (2S)-2-isopropylmalate. It participates in amino-acid biosynthesis; L-leucine biosynthesis; L-leucine from 3-methyl-2-oxobutanoate: step 2/4. Catalyzes the isomerization between 2-isopropylmalate and 3-isopropylmalate, via the formation of 2-isopropylmaleate. This Sorangium cellulosum (strain So ce56) (Polyangium cellulosum (strain So ce56)) protein is 3-isopropylmalate dehydratase large subunit.